Reading from the N-terminus, the 156-residue chain is Protein Smg homolog (156 aa).

The protein belongs to the Smg family.

This Halorhodospira halophila (strain DSM 244 / SL1) (Ectothiorhodospira halophila (strain DSM 244 / SL1)) protein is Protein Smg homolog.